We begin with the raw amino-acid sequence, 483 residues long: Betaine aldehyde dehydrogenase (483 aa).

2 residues coordinate K(+): isoleucine 27 and aspartate 93. 149 to 151 (GAW) contributes to the NAD(+) binding site. The active-site Charge relay system is the lysine 161. 175–178 (KPSE) contributes to the NAD(+) binding site. Residue valine 179 coordinates K(+). Residue 228–231 (SVPT) participates in NAD(+) binding. K(+) is bound at residue valine 243. The active-site Proton acceptor is glutamate 249. NAD(+)-binding residues include glycine 251, cysteine 283, and glutamate 380. Cysteine 283 functions as the Nucleophile in the catalytic mechanism. Cysteine 283 is modified (cysteine sulfenic acid (-SOH)). K(+) contacts are provided by lysine 450 and glycine 453. Glutamate 457 serves as the catalytic Charge relay system.

The protein belongs to the aldehyde dehydrogenase family. In terms of assembly, dimer of dimers. It depends on K(+) as a cofactor.

It carries out the reaction betaine aldehyde + NAD(+) + H2O = glycine betaine + NADH + 2 H(+). The protein operates within amine and polyamine biosynthesis; betaine biosynthesis via choline pathway; betaine from betaine aldehyde: step 1/1. Its function is as follows. Involved in the biosynthesis of the osmoprotectant glycine betaine. Catalyzes the irreversible oxidation of betaine aldehyde to the corresponding acid. The chain is Betaine aldehyde dehydrogenase from Cereibacter sphaeroides (strain ATCC 17023 / DSM 158 / JCM 6121 / CCUG 31486 / LMG 2827 / NBRC 12203 / NCIMB 8253 / ATH 2.4.1.) (Rhodobacter sphaeroides).